Here is a 1069-residue protein sequence, read N- to C-terminus: Thyrotropin-releasing hormone-degrading ectoenzyme (1069 aa).

A compositionally biased stretch (acidic residues) spans 1–11; it reads MALDGELGEQE. Residues 1 to 46 are disordered; it reads MALDGELGEQEEEKKKKKKKKRKKKKEEEEEEEGAEKSSSPFAAAM. The Cytoplasmic portion of the chain corresponds to 1-85; sequence MALDGELGEQ…ERHIAVHKRL (85 aa). A compositionally biased stretch (basic residues) spans 15 to 25; the sequence is KKKKKKKRKKK. Residues 86–106 form a helical; Signal-anchor for type II membrane protein membrane-spanning segment; the sequence is VLAFAVSLVALLAVTMLAVLL. The Extracellular portion of the chain corresponds to 107–1069; sequence SLRFDECGAS…FQWLGKALRH (963 aa). Residues 117–179 are disordered; the sequence is ATPGADGGPS…PSEEEREPWE (63 aa). Residues 121–136 are compositionally biased toward gly residues; the sequence is ADGGPSGFPERGGNGS. 5 N-linked (GlcNAc...) asparagine glycosylation sites follow: N134, N205, N220, N267, and N383. 449–453 provides a ligand contact to substrate; sequence AAMEN. H485 serves as a coordination point for Zn(2+). The Proton acceptor role is filled by E486. H489 and E508 together coordinate Zn(2+). N650, N679, N694, N708, N729, N845, and N951 each carry an N-linked (GlcNAc...) asparagine glycan.

The protein belongs to the peptidase M1 family. As to quaternary structure, homodimer; disulfide-linked. The cofactor is Zn(2+). As to expression, predominantly expressed in brain.

The protein resides in the membrane. The catalysed reaction is Release of the N-terminal pyroglutamyl group from pGlu-|-His-Xaa tripeptides and pGlu-|-His-Xaa-Gly tetrapeptides.. In terms of biological role, specific inactivation of TRH after its release. This Homo sapiens (Human) protein is Thyrotropin-releasing hormone-degrading ectoenzyme (TRHDE).